The chain runs to 124 residues: S-adenosylmethionine decarboxylase proenzyme (124 aa).

The active-site Schiff-base intermediate with substrate; via pyruvic acid is the S71. At S71 the chain carries Pyruvic acid (Ser); by autocatalysis. Catalysis depends on H76, which acts as the Proton acceptor; for processing activity. C91 acts as the Proton donor; for catalytic activity in catalysis.

This sequence belongs to the prokaryotic AdoMetDC family. Type 1 subfamily. In terms of assembly, heterotetramer of two alpha and two beta chains arranged as a dimer of alpha/beta heterodimers. It depends on pyruvate as a cofactor. Is synthesized initially as an inactive proenzyme. Formation of the active enzyme involves a self-maturation process in which the active site pyruvoyl group is generated from an internal serine residue via an autocatalytic post-translational modification. Two non-identical subunits are generated from the proenzyme in this reaction, and the pyruvate is formed at the N-terminus of the alpha chain, which is derived from the carboxyl end of the proenzyme. The post-translation cleavage follows an unusual pathway, termed non-hydrolytic serinolysis, in which the side chain hydroxyl group of the serine supplies its oxygen atom to form the C-terminus of the beta chain, while the remainder of the serine residue undergoes an oxidative deamination to produce ammonia and the pyruvoyl group blocking the N-terminus of the alpha chain.

It carries out the reaction S-adenosyl-L-methionine + H(+) = S-adenosyl 3-(methylsulfanyl)propylamine + CO2. Its pathway is amine and polyamine biosynthesis; S-adenosylmethioninamine biosynthesis; S-adenosylmethioninamine from S-adenosyl-L-methionine: step 1/1. Competitively inhibited by methylglyoxal bis-guanylhydrazone. Irreversibly inhibited by NaBH(4) in vitro. Functionally, catalyzes the decarboxylation of S-adenosylmethionine to S-adenosylmethioninamine (dcAdoMet), the propylamine donor required for the synthesis of the polyamines spermine and spermidine from the diamine putrescine. Has no arginine decarboxylase (ArgDC) activity. The protein is S-adenosylmethionine decarboxylase proenzyme (speH) of Saccharolobus solfataricus (strain ATCC 35092 / DSM 1617 / JCM 11322 / P2) (Sulfolobus solfataricus).